The sequence spans 165 residues: Large ribosomal subunit protein uL10 (165 aa).

It belongs to the universal ribosomal protein uL10 family. In terms of assembly, part of the ribosomal stalk of the 50S ribosomal subunit. The N-terminus interacts with L11 and the large rRNA to form the base of the stalk. The C-terminus forms an elongated spine to which L12 dimers bind in a sequential fashion forming a multimeric L10(L12)X complex.

Forms part of the ribosomal stalk, playing a central role in the interaction of the ribosome with GTP-bound translation factors. The protein is Large ribosomal subunit protein uL10 of Burkholderia lata (strain ATCC 17760 / DSM 23089 / LMG 22485 / NCIMB 9086 / R18194 / 383).